The chain runs to 343 residues: Phosphate acyltransferase (343 aa).

This sequence belongs to the PlsX family. In terms of assembly, homodimer. Probably interacts with PlsY.

The protein resides in the cytoplasm. It carries out the reaction a fatty acyl-[ACP] + phosphate = an acyl phosphate + holo-[ACP]. Its pathway is lipid metabolism; phospholipid metabolism. Its function is as follows. Catalyzes the reversible formation of acyl-phosphate (acyl-PO(4)) from acyl-[acyl-carrier-protein] (acyl-ACP). This enzyme utilizes acyl-ACP as fatty acyl donor, but not acyl-CoA. In Limosilactobacillus reuteri (strain DSM 20016) (Lactobacillus reuteri), this protein is Phosphate acyltransferase.